A 1039-amino-acid chain; its full sequence is Error-prone DNA polymerase (1039 aa).

The protein belongs to the DNA polymerase type-C family. DnaE2 subfamily.

It is found in the cytoplasm. The catalysed reaction is DNA(n) + a 2'-deoxyribonucleoside 5'-triphosphate = DNA(n+1) + diphosphate. Its function is as follows. DNA polymerase involved in damage-induced mutagenesis and translesion synthesis (TLS). It is not the major replicative DNA polymerase. The polypeptide is Error-prone DNA polymerase (Corynebacterium diphtheriae (strain ATCC 700971 / NCTC 13129 / Biotype gravis)).